The sequence spans 411 residues: CinA-like protein (411 aa).

It belongs to the CinA family.

This Dictyoglomus turgidum (strain DSM 6724 / Z-1310) protein is CinA-like protein.